Here is a 302-residue protein sequence, read N- to C-terminus: 4-hydroxy-tetrahydrodipicolinate synthase (302 aa).

Thr55 serves as a coordination point for pyruvate. Tyr144 functions as the Proton donor/acceptor in the catalytic mechanism. Lys172 (schiff-base intermediate with substrate) is an active-site residue. A pyruvate-binding site is contributed by Val214.

This sequence belongs to the DapA family. Homotetramer; dimer of dimers.

Its subcellular location is the cytoplasm. The catalysed reaction is L-aspartate 4-semialdehyde + pyruvate = (2S,4S)-4-hydroxy-2,3,4,5-tetrahydrodipicolinate + H2O + H(+). It functions in the pathway amino-acid biosynthesis; L-lysine biosynthesis via DAP pathway; (S)-tetrahydrodipicolinate from L-aspartate: step 3/4. Its function is as follows. Catalyzes the condensation of (S)-aspartate-beta-semialdehyde [(S)-ASA] and pyruvate to 4-hydroxy-tetrahydrodipicolinate (HTPA). This Prochlorococcus marinus (strain NATL2A) protein is 4-hydroxy-tetrahydrodipicolinate synthase.